The following is a 56-amino-acid chain: UPF0434 protein Ecaj_0131 (56 aa).

Belongs to the UPF0434 family.

The sequence is that of UPF0434 protein Ecaj_0131 from Ehrlichia canis (strain Jake).